Reading from the N-terminus, the 511-residue chain is NADH-quinone oxidoreductase subunit N 1 (511 aa).

The next 14 helical transmembrane spans lie at 15 to 35 (LALPMLVLSGFAVAILLLDLV), 46 to 66 (ALALAGLAAATMSLAKVWQAV), 89 to 109 (FAIYFYLLFIVGAAVAILMSI), 120 to 140 (GEYHALILFATIGMMCMASGM), 142 to 162 (LILLFVGLELMALSTYVLVGF), 177 to 197 (LLLGAFSSGIFAYGLSLFYGL), 221 to 241 (PIALLALITTATGLLFKIAAV), 264 to 284 (VAVKAAGWAMLLRIFLFMLWP), 289 to 309 (YTPILIFVAVATMIGGNFAAL), 317 to 337 (LLAYSSISHVGYMLLGLVASD), 347 to 367 (GILVYLAVYTFMNLGAFAVIT), 393 to 413 (AVLLLVFLLSLAGIPPLAGFW), 426 to 446 (GHYTLAVVAVLFAVLGMYYYL), and 471 to 491 (AALWISALGTLGIGLFPEVFL).

This sequence belongs to the complex I subunit 2 family. In terms of assembly, NDH-1 is composed of 14 different subunits. Subunits NuoA, H, J, K, L, M, N constitute the membrane sector of the complex.

It localises to the cell inner membrane. The catalysed reaction is a quinone + NADH + 5 H(+)(in) = a quinol + NAD(+) + 4 H(+)(out). Its function is as follows. NDH-1 shuttles electrons from NADH, via FMN and iron-sulfur (Fe-S) centers, to quinones in the respiratory chain. The immediate electron acceptor for the enzyme in this species is believed to be ubiquinone. Couples the redox reaction to proton translocation (for every two electrons transferred, four hydrogen ions are translocated across the cytoplasmic membrane), and thus conserves the redox energy in a proton gradient. The polypeptide is NADH-quinone oxidoreductase subunit N 1 (Koribacter versatilis (strain Ellin345)).